Reading from the N-terminus, the 627-residue chain is tRNA uridine 5-carboxymethylaminomethyl modification enzyme MnmG (627 aa).

14–19 (GAGHAG) lines the FAD pocket. 275–289 (GPRYCPSIEDKVVKF) contacts NAD(+).

This sequence belongs to the MnmG family. In terms of assembly, homodimer. Heterotetramer of two MnmE and two MnmG subunits. FAD serves as cofactor.

The protein resides in the cytoplasm. NAD-binding protein involved in the addition of a carboxymethylaminomethyl (cmnm) group at the wobble position (U34) of certain tRNAs, forming tRNA-cmnm(5)s(2)U34. This chain is tRNA uridine 5-carboxymethylaminomethyl modification enzyme MnmG, found in Lachnoclostridium phytofermentans (strain ATCC 700394 / DSM 18823 / ISDg) (Clostridium phytofermentans).